The chain runs to 25 residues: Dermaseptin-5.1TR (25 aa).

At V25 the chain carries Valine amide.

Expressed by the skin glands.

It localises to the secreted. Its function is as follows. Has antimicrobial activity. This Phyllomedusa trinitatis (Trinidad leaf frog) protein is Dermaseptin-5.1TR.